The primary structure comprises 598 residues: Kinesin-like protein klp-3 (598 aa).

Coiled-coil stretches lie at residues 19 to 66 (EVEL…FIQG) and 89 to 118 (GNLS…LETD). The tract at residues 133-155 (ALSRDSSCSVPRSVSPQPTGDVI) is disordered. The segment covering 136-150 (RDSSCSVPRSVSPQP) has biased composition (polar residues). Residues 170–248 (HWKKLQRCAE…LVELNGNIRV (79 aa)) adopt a coiled-coil conformation. Residues 245-565 (NIRVFYRIRP…VNFAEKIGQV (321 aa)) form the Kinesin motor domain. 328–335 (GHTGSGKT) serves as a coordination point for ATP. The tract at residues 569-598 (SGTMKREPTRRSMTGISSGQRREIPASPRK) is disordered.

The protein belongs to the TRAFAC class myosin-kinesin ATPase superfamily. Kinesin family.

The protein resides in the cytoplasm. It is found in the cytoskeleton. In Caenorhabditis elegans, this protein is Kinesin-like protein klp-3 (klp-3).